Here is a 311-residue protein sequence, read N- to C-terminus: Mediator of RNA polymerase II transcription subunit 27 (311 aa).

The protein belongs to the Mediator complex subunit 27 family. In terms of assembly, component of the Mediator complex.

It localises to the nucleus. Its function is as follows. Component of the Mediator complex, a coactivator involved in the regulated transcription of nearly all RNA polymerase II-dependent genes. Mediator functions as a bridge to convey information from gene-specific regulatory proteins to the basal RNA polymerase II transcription machinery. Mediator is recruited to promoters by direct interactions with regulatory proteins and serves as a scaffold for the assembly of a functional preinitiation complex with RNA polymerase II and the general transcription factors. Required for the development of dopaminergic amacrine cells in the retina. May also negatively regulate the development of rod photoreceptor cells. The polypeptide is Mediator of RNA polymerase II transcription subunit 27 (med27) (Danio rerio (Zebrafish)).